The sequence spans 275 residues: 3-methyl-2-oxobutanoate hydroxymethyltransferase (275 aa).

Residues D49 and D88 each contribute to the Mg(2+) site. 3-methyl-2-oxobutanoate-binding positions include 49–50 (DS), D88, and K118. E120 provides a ligand contact to Mg(2+). E187 (proton acceptor) is an active-site residue.

This sequence belongs to the PanB family. In terms of assembly, homodecamer; pentamer of dimers. Requires Mg(2+) as cofactor.

It is found in the cytoplasm. The enzyme catalyses 3-methyl-2-oxobutanoate + (6R)-5,10-methylene-5,6,7,8-tetrahydrofolate + H2O = 2-dehydropantoate + (6S)-5,6,7,8-tetrahydrofolate. It participates in cofactor biosynthesis; (R)-pantothenate biosynthesis; (R)-pantoate from 3-methyl-2-oxobutanoate: step 1/2. In terms of biological role, catalyzes the reversible reaction in which hydroxymethyl group from 5,10-methylenetetrahydrofolate is transferred onto alpha-ketoisovalerate to form ketopantoate. This chain is 3-methyl-2-oxobutanoate hydroxymethyltransferase, found in Hyphomonas neptunium (strain ATCC 15444).